Consider the following 185-residue polypeptide: Ribosome-recycling factor (185 aa).

The protein belongs to the RRF family.

It localises to the cytoplasm. Its function is as follows. Responsible for the release of ribosomes from messenger RNA at the termination of protein biosynthesis. May increase the efficiency of translation by recycling ribosomes from one round of translation to another. The chain is Ribosome-recycling factor from Haemophilus ducreyi (strain 35000HP / ATCC 700724).